The chain runs to 230 residues: Dephospho-CoA kinase (230 aa).

A disordered region spans residues 1-20 (MSKYAAIPSPYSHQPQAPDH). One can recognise a DPCK domain in the interval 26–225 (VVGLTGGIGS…QDYLKLAQQL (200 aa)). An ATP-binding site is contributed by 34 to 39 (GSGKSA).

It belongs to the CoaE family.

It is found in the cytoplasm. It carries out the reaction 3'-dephospho-CoA + ATP = ADP + CoA + H(+). It functions in the pathway cofactor biosynthesis; coenzyme A biosynthesis; CoA from (R)-pantothenate: step 5/5. Its function is as follows. Catalyzes the phosphorylation of the 3'-hydroxyl group of dephosphocoenzyme A to form coenzyme A. In Psychrobacter arcticus (strain DSM 17307 / VKM B-2377 / 273-4), this protein is Dephospho-CoA kinase.